Reading from the N-terminus, the 151-residue chain is Large ribosomal subunit protein uL15 (151 aa).

Residues M1 to M57 form a disordered region. Positions K12–R23 are enriched in basic residues. Residues I25 to M37 show a composition bias toward gly residues.

Belongs to the universal ribosomal protein uL15 family. Part of the 50S ribosomal subunit.

In terms of biological role, binds to the 23S rRNA. This chain is Large ribosomal subunit protein uL15, found in Synechococcus sp. (strain CC9605).